A 96-amino-acid polypeptide reads, in one-letter code: Large ribosomal subunit protein eL21 (96 aa).

This sequence belongs to the eukaryotic ribosomal protein eL21 family.

The chain is Large ribosomal subunit protein eL21 from Methanosphaerula palustris (strain ATCC BAA-1556 / DSM 19958 / E1-9c).